Reading from the N-terminus, the 749-residue chain is Photosystem I P700 chlorophyll a apoprotein A2 (749 aa).

8 consecutive transmembrane segments (helical) span residues 46 to 69 (LFST…FHIA), 135 to 158 (LYQG…LHLQ), 175 to 199 (MNHH…HVAI), 273 to 291 (ISHH…GHMY), 343 to 366 (LHFQ…HHMG), 382 to 408 (AALY…IFFV), 430 to 452 (ALIS…LYLH), and 532 to 550 (FLVH…LILI). Residues cysteine 574 and cysteine 583 each contribute to the [4Fe-4S] cluster site. Helical transmembrane passes span 590 to 611 (STYM…YWHW) and 658 to 680 (LSPW…MFLI). Residues histidine 669, methionine 677, and tyrosine 685 each contribute to the divinyl chlorophyll a site. Tryptophan 686 contacts phylloquinone. Residues 722 to 742 (LVGVTHFAVGNIFTFGAFVIA) form a helical membrane-spanning segment.

It belongs to the PsaA/PsaB family. In terms of assembly, the PsaA/B heterodimer binds the P700 chlorophyll special pair and subsequent electron acceptors. PSI consists of a core antenna complex that captures photons, and an electron transfer chain that converts photonic excitation into a charge separation. The cyanobacterial PSI reaction center is composed of one copy each of PsaA,B,C,D,E,F,I,J,K,L,M and X, and forms trimeric complexes. PSI electron transfer chain: 5 divinyl chlorophyll a, 1 divinyl chlorophyll a', 2 phylloquinones and 3 4Fe-4S clusters. PSI core antenna: 90 divinyl chlorophyll a, 22 carotenoids, 3 phospholipids and 1 galactolipid. P700 is a divinyl chlorophyll a/divinyl chlorophyll a' dimer, A0 is one or more divinyl chlorophyll a, A1 is one or both phylloquinones and FX is a shared 4Fe-4S iron-sulfur center. is required as a cofactor.

It localises to the cellular thylakoid membrane. It catalyses the reaction reduced [plastocyanin] + hnu + oxidized [2Fe-2S]-[ferredoxin] = oxidized [plastocyanin] + reduced [2Fe-2S]-[ferredoxin]. Functionally, psaA and PsaB bind P700, the primary electron donor of photosystem I (PSI), as well as the electron acceptors A0, A1 and FX. PSI is a plastocyanin/cytochrome c6-ferredoxin oxidoreductase, converting photonic excitation into a charge separation, which transfers an electron from the donor P700 chlorophyll pair to the spectroscopically characterized acceptors A0, A1, FX, FA and FB in turn. Oxidized P700 is reduced on the lumenal side of the thylakoid membrane by plastocyanin or cytochrome c6. The polypeptide is Photosystem I P700 chlorophyll a apoprotein A2 (Prochlorococcus marinus (strain MIT 9313)).